Reading from the N-terminus, the 505-residue chain is Chemotaxis regulatory protein ChePep (505 aa).

2 disordered regions span residues 154–403 and 420–465; these read EPNN…EDIP and EAVA…SSPL. Composition is skewed to basic and acidic residues over residues 172–263, 289–311, 337–346, 359–373, and 386–398; these read EEVK…EKTQ, ENKE…EVVT, QAHELEKQEI, QDKE…KEET, and PQEK…HYES. Over residues 440 to 451 the composition is skewed to low complexity; sequence TETSKNENNTET.

In terms of assembly, interacts with CheZ; the interaction is essential for each other polar localization.

The protein resides in the cytoplasm. Its function is as follows. Plays an essential role in chemotaxis. Regulates flagellar rotation through the formation of a complex with chemotaxis protein CheZ. Plays a major role in colonization of the stomach. This Helicobacter pylori (strain ATCC 700392 / 26695) (Campylobacter pylori) protein is Chemotaxis regulatory protein ChePep.